Reading from the N-terminus, the 282-residue chain is MSSSTSAAPVVTIGRVKFGNDLPISIIAGPCQLESRQHALEVASALKEIAARLNIGLVYKTSFDKANRTSASAARGLGLAQSLPIFAEIRSSLGLPVLTDVHEATQCAEVAQAVDILQIPAFLCRQTDLLLAAAATGKVVNVKKGQFLAPWDMANVVTKITSANNPNVLVTERGASFGYNTLVSDMRALPILARTTGAPVIFDATHSVQQPGGKGTSSGGEREFVPVLARAAVAVGVAGVFIETHPDPDSAPSDGPNMVPLREFEGLIRRLMAFDALAKNPR.

This sequence belongs to the KdsA family.

Its subcellular location is the cytoplasm. The catalysed reaction is D-arabinose 5-phosphate + phosphoenolpyruvate + H2O = 3-deoxy-alpha-D-manno-2-octulosonate-8-phosphate + phosphate. Its pathway is carbohydrate biosynthesis; 3-deoxy-D-manno-octulosonate biosynthesis; 3-deoxy-D-manno-octulosonate from D-ribulose 5-phosphate: step 2/3. It functions in the pathway bacterial outer membrane biogenesis; lipopolysaccharide biosynthesis. In Bradyrhizobium diazoefficiens (strain JCM 10833 / BCRC 13528 / IAM 13628 / NBRC 14792 / USDA 110), this protein is 2-dehydro-3-deoxyphosphooctonate aldolase.